Consider the following 150-residue polypeptide: Large ribosomal subunit protein bL9 (150 aa).

The protein belongs to the bacterial ribosomal protein bL9 family.

Its function is as follows. Binds to the 23S rRNA. The protein is Large ribosomal subunit protein bL9 of Acidovorax ebreus (strain TPSY) (Diaphorobacter sp. (strain TPSY)).